A 104-amino-acid polypeptide reads, in one-letter code: Circadian clock oscillator protein KaiB (104 aa).

It belongs to the KaiB family. In terms of assembly, the KaiABC complex composition changes during the circadian cycle to control KaiC phosphorylation. Complexes KaiC(6), KaiA(2-4):KaiC(6), KaiB(6):KaiC(6) and KaiC(6):KaiB(6):KaiA(12) are among the most important forms, many form cooperatively. Undergoes a major conformational rearrangment; in the free state forms homotetramers as a dimer of dimers. When bound to the CI domain of KaiC switches to a monomeric thioredoxin-fold (KaiB(fs)). KaiB(fs) binds CikA, leading it to dephosphorylate phospho-RpaA.

Key component of the KaiABC oscillator complex, which constitutes the main circadian regulator in cyanobacteria. Complex composition changes during the circadian cycle to control KaiC phosphorylation. KaiA stimulates KaiC autophosphorylation, while KaiB sequesters KaiA, leading to KaiC autodephosphorylation. Phospho-Ser-431 KaiC accumulation triggers binding of KaiB to form the KaiB(6):KaiC(6) complex, leading to changes in output regulators CikA and SasA. KaiB switches to a thioredoxin-like fold (KaiB(fs)) when bound to KaiC. KaiB(6):KaiC(6) formation exposes a site for KaiA binding that sequesters KaiA from KaiC, making the KaiC(6):KaiB(6):KaiA(12) complex that results in KaiC autodephosphorylation. In terms of biological role, a metamorphic protein which reversibly switches between an inactive tetrameric fold and a rare, thioredoxin-like monomeric fold (KaiB(fs)). KaiB(fs) binds phospho-KaiC, KaiA and CikA. KaiA and CikA compete for binding to KaiB(fs), and KaiB(fs) and SasA compete for binding to KaiC, thus the clock oscillator and output signal pathway are tightly coupled. The protein is Circadian clock oscillator protein KaiB of Trichodesmium erythraeum (strain IMS101).